Consider the following 294-residue polypeptide: 4-hydroxy-tetrahydrodipicolinate synthase (294 aa).

Pyruvate is bound at residue Thr-46. Tyr-134 functions as the Proton donor/acceptor in the catalytic mechanism. The active-site Schiff-base intermediate with substrate is the Lys-163. Ile-205 provides a ligand contact to pyruvate.

It belongs to the DapA family. Homotetramer; dimer of dimers.

The protein localises to the cytoplasm. The enzyme catalyses L-aspartate 4-semialdehyde + pyruvate = (2S,4S)-4-hydroxy-2,3,4,5-tetrahydrodipicolinate + H2O + H(+). It functions in the pathway amino-acid biosynthesis; L-lysine biosynthesis via DAP pathway; (S)-tetrahydrodipicolinate from L-aspartate: step 3/4. In terms of biological role, catalyzes the condensation of (S)-aspartate-beta-semialdehyde [(S)-ASA] and pyruvate to 4-hydroxy-tetrahydrodipicolinate (HTPA). In Clostridium tetani (strain Massachusetts / E88), this protein is 4-hydroxy-tetrahydrodipicolinate synthase.